Consider the following 209-residue polypeptide: Uracil phosphoribosyltransferase (209 aa).

Residues R79, R104, and D131–S139 contribute to the 5-phospho-alpha-D-ribose 1-diphosphate site. Uracil contacts are provided by residues I194 and G199 to A201. D200 is a binding site for 5-phospho-alpha-D-ribose 1-diphosphate.

This sequence belongs to the UPRTase family. Requires Mg(2+) as cofactor.

It carries out the reaction UMP + diphosphate = 5-phospho-alpha-D-ribose 1-diphosphate + uracil. The protein operates within pyrimidine metabolism; UMP biosynthesis via salvage pathway; UMP from uracil: step 1/1. With respect to regulation, allosterically activated by GTP. Functionally, catalyzes the conversion of uracil and 5-phospho-alpha-D-ribose 1-diphosphate (PRPP) to UMP and diphosphate. The polypeptide is Uracil phosphoribosyltransferase (Exiguobacterium sp. (strain ATCC BAA-1283 / AT1b)).